Consider the following 259-residue polypeptide: Type III pantothenate kinase (259 aa).

Residue 9-16 (DAGNSRIK) coordinates ATP. Residues Y93 and 100–103 (GSDR) each bind substrate. Catalysis depends on D102, which acts as the Proton acceptor. An ATP-binding site is contributed by T126. A substrate-binding site is contributed by T190.

It belongs to the type III pantothenate kinase family. As to quaternary structure, homodimer. The cofactor is NH4(+). K(+) serves as cofactor.

Its subcellular location is the cytoplasm. The catalysed reaction is (R)-pantothenate + ATP = (R)-4'-phosphopantothenate + ADP + H(+). It participates in cofactor biosynthesis; coenzyme A biosynthesis; CoA from (R)-pantothenate: step 1/5. Its function is as follows. Catalyzes the phosphorylation of pantothenate (Pan), the first step in CoA biosynthesis. The polypeptide is Type III pantothenate kinase (Burkholderia pseudomallei (strain K96243)).